The chain runs to 1157 residues: DNA-directed RNA polymerase subunit beta (1157 aa).

Belongs to the RNA polymerase beta chain family. As to quaternary structure, the RNAP catalytic core consists of 2 alpha, 1 beta, 1 beta' and 1 omega subunit. When a sigma factor is associated with the core the holoenzyme is formed, which can initiate transcription.

The catalysed reaction is RNA(n) + a ribonucleoside 5'-triphosphate = RNA(n+1) + diphosphate. Its function is as follows. DNA-dependent RNA polymerase catalyzes the transcription of DNA into RNA using the four ribonucleoside triphosphates as substrates. This Tropheryma whipplei (strain TW08/27) (Whipple's bacillus) protein is DNA-directed RNA polymerase subunit beta.